We begin with the raw amino-acid sequence, 284 residues long: 4-diphosphocytidyl-2-C-methyl-D-erythritol kinase (284 aa).

K10 is an active-site residue. 92-102 provides a ligand contact to ATP; the sequence is PYGAGLGSGSS. The active site involves D134.

It belongs to the GHMP kinase family. IspE subfamily.

The enzyme catalyses 4-CDP-2-C-methyl-D-erythritol + ATP = 4-CDP-2-C-methyl-D-erythritol 2-phosphate + ADP + H(+). It functions in the pathway isoprenoid biosynthesis; isopentenyl diphosphate biosynthesis via DXP pathway; isopentenyl diphosphate from 1-deoxy-D-xylulose 5-phosphate: step 3/6. Functionally, catalyzes the phosphorylation of the position 2 hydroxy group of 4-diphosphocytidyl-2C-methyl-D-erythritol. The polypeptide is 4-diphosphocytidyl-2-C-methyl-D-erythritol kinase (Salinibacter ruber (strain DSM 13855 / M31)).